The sequence spans 816 residues: Phosphatidylinositol 4-kinase beta (816 aa).

Residues 1 to 30 (MGDTVVEPTPLKPTSESTPGPAGSNGGSLL) are disordered. G2 is modified (N-acetylglycine). The interaction with ACBD3 stretch occupies residues 2-68 (GDTVVEPTPL…VKLLHGGVAI (67 aa)). The PIK helical domain occupies 52–242 (CQEVLEKVKL…GTKLRKLILS (191 aa)). Residues 248–318 (AHRKRELPSL…TESIDNSFSS (71 aa)) are disordered. S258 bears the Phosphoserine mark. T263 is modified (phosphothreonine). S266, S275, S277, S284, and S294 each carry phosphoserine. Composition is skewed to polar residues over residues 278-297 (DATA…SNPK) and 306-318 (SSST…SFSS). S428 carries the phosphoserine modification. T438 bears the Phosphothreonine mark. Phosphoserine is present on S511. Residues T517 and T519 each carry the phosphothreonine modification. Residues 535–801 (EPWQEKVRRI…MVDGSMRSIT (267 aa)) enclose the PI3K/PI4K catalytic domain. The interval 541-547 (VRRIREG) is G-loop. The tract at residues 668 to 676 (QVKDRHNGN) is catalytic loop. Residues 687–711 (HIDFGFILSSSPRNLGFETSAFKLT) are activation loop.

Belongs to the PI3/PI4-kinase family. Type III PI4K subfamily. In terms of assembly, interacts with ARF1 and ARF3 in the Golgi complex, but not with ARF4, ARF5 or ARF6. Interacts with NCS1/FREQ in a calcium-independent manner. Interacts with CALN1/CABP8 and CALN2/CABP7; in a calcium-dependent manner; this interaction competes with NCS1/FREQ binding. Interacts with ACBD3. Interacts with ARMH3, YWHAB, YWHAE, YWHAG, YWHAH, YWHAQ, YWHAZ and SFN. Interacts with GGA2 (via VHS domain); the interaction is important for PI4KB location at the Golgi apparatus membrane. Interacts with ATG9A. It depends on Mg(2+) as a cofactor. Requires Mn(2+) as cofactor.

Its subcellular location is the endomembrane system. It localises to the mitochondrion outer membrane. The protein localises to the rough endoplasmic reticulum membrane. It is found in the golgi apparatus. The protein resides in the golgi apparatus membrane. It catalyses the reaction a 1,2-diacyl-sn-glycero-3-phospho-(1D-myo-inositol) + ATP = a 1,2-diacyl-sn-glycero-3-phospho-(1D-myo-inositol 4-phosphate) + ADP + H(+). With respect to regulation, inhibited by wortmannin. Increased kinase activity upon interaction with NCS1/FREQ. In terms of biological role, phosphorylates phosphatidylinositol (PI) in the first committed step in the production of the second messenger inositol-1,4,5,-trisphosphate (PIP). May regulate Golgi disintegration/reorganization during mitosis, possibly via its phosphorylation. Involved in Golgi-to-plasma membrane trafficking. May play an important role in the inner ear development. This chain is Phosphatidylinositol 4-kinase beta (PI4KB), found in Otolemur garnettii (Small-eared galago).